We begin with the raw amino-acid sequence, 628 residues long: Cystathionine gamma-synthase-like enzyme iboG2 (628 aa).

Tyr313 contributes to the substrate binding site. Position 417 is an N6-(pyridoxal phosphate)lysine (Lys417).

Belongs to the trans-sulfuration enzymes family. Pyridoxal 5'-phosphate serves as cofactor.

The protein operates within secondary metabolite biosynthesis. Cystathionine gamma-synthase-like enzyme; part of the gene cluster that mediates the biosynthesis of the psychoactive metabolites ibotenic acid and muscimol. The first committed step is glutamate hydroxylation by the 2-oxoglutarate-dependent dioxygenase iboH, and the last step is decarboxylation of ibotenic acid to muscimol by the decarboxylase iboD. The order of the intermediate reactions is somewhat ambiguous. IboA likely activates the carboxylic acid at position 5 to introduce an amide bond, and the flavin monooxygenase iboF generates the N-O bond. There are several options for the latter step. One option is that iboF directly hydroxylates the amide nitrogen formed by iboA to produce a hydroxamic acid species. Another option is that iboF hydroxylates an external N-containing compound, whose resulting N-O bond is subsequently introduced into the hydroxyglutamate scaffold. The paralogous PLP-dependent cystathionine gamma-synthase-like enzymes iboG1 and iboG2 are likely involved in substitution of the OH group at position 3 by the O-N moiety. The first cyclic intermediate is most probably tricholomic acid which is likely desaturated to ibotenic acid by the cytochrome P450 monooxygenase iboC. This chain is Cystathionine gamma-synthase-like enzyme iboG2, found in Amanita muscaria (strain Koide BX008).